The primary structure comprises 600 residues: Probable translation initiation factor IF-2 (600 aa).

Positions 10–227 (LRQPIVVVLG…LLAGLTQRYL (218 aa)) constitute a tr-type G domain. The segment at 19–26 (GHVDHGKT) is G1. Residue 19–26 (GHVDHGKT) participates in GTP binding. Residues 44–48 (EMTQE) are G2. The tract at residues 83–86 (DTPG) is G3. GTP-binding positions include 83-87 (DTPGH) and 137-140 (NKID). Residues 137-140 (NKID) form a G4 region. The interval 205 to 207 (SAK) is G5.

The protein belongs to the TRAFAC class translation factor GTPase superfamily. Classic translation factor GTPase family. IF-2 subfamily.

Function in general translation initiation by promoting the binding of the formylmethionine-tRNA to ribosomes. Seems to function along with eIF-2. This chain is Probable translation initiation factor IF-2, found in Saccharolobus solfataricus (strain ATCC 35092 / DSM 1617 / JCM 11322 / P2) (Sulfolobus solfataricus).